Here is a 219-residue protein sequence, read N- to C-terminus: Charged multivesicular body protein 5 (219 aa).

Positions 1 to 10 (MNRLFGKAKP) are enriched in basic residues. Residues 1-21 (MNRLFGKAKPKAPPPSLTDCI) are disordered. The (Microbial infection) N6-stearoyl lysine moiety is linked to residue Lys-7. Positions 26–179 (SRAESIDKKI…LGDELLADED (154 aa)) form a coiled coil. Ser-86 bears the Phosphoserine mark. Positions 121–158 (KQVKIDQIEDLQDQLEDMMEDANEIQEALSRSYGTPEL) are interaction with VTA1. The interval 188–219 (SAPAIPEGVPTDTKNKDGVLVDEFGLPQIPAS) is disordered.

It belongs to the SNF7 family. Probable peripherally associated component of the endosomal sorting required for transport complex III (ESCRT-III). ESCRT-III components are thought to multimerize to form a flat lattice on the perimeter membrane of the endosome. Several assembly forms of ESCRT-III may exist that interact and act sequentially. Interacts with VTA1; the interaction involves soluble CHMP5. Interacts with CHMP2A. Interacts with NOD2. Interacts with BROX. Post-translationally, (Microbial infection) Stearoylated By S.flexneri N-epsilon-fatty acyltransferase IcsB, promoting S.flexneri evasion of autophagy. ISGylated. Isgylation inhibits its interaction with VTA1.

The protein localises to the cytoplasm. It is found in the cytosol. The protein resides in the endosome membrane. It localises to the midbody. Its function is as follows. Probable peripherally associated component of the endosomal sorting required for transport complex III (ESCRT-III) which is involved in multivesicular bodies (MVBs) formation and sorting of endosomal cargo proteins into MVBs. MVBs contain intraluminal vesicles (ILVs) that are generated by invagination and scission from the limiting membrane of the endosome and mostly are delivered to lysosomes enabling degradation of membrane proteins, such as stimulated growth factor receptors, lysosomal enzymes and lipids. The MVB pathway appears to require the sequential function of ESCRT-O, -I,-II and -III complexes. ESCRT-III proteins mostly dissociate from the invaginating membrane before the ILV is released. The ESCRT machinery also functions in topologically equivalent membrane fission events, such as the terminal stages of cytokinesis and the budding of enveloped viruses (HIV-1 and other lentiviruses). ESCRT-III proteins are believed to mediate the necessary vesicle extrusion and/or membrane fission activities, possibly in conjunction with the AAA ATPase VPS4. Involved in HIV-1 p6- and p9-dependent virus release. In Homo sapiens (Human), this protein is Charged multivesicular body protein 5 (CHMP5).